Here is a 417-residue protein sequence, read N- to C-terminus: MSALRHVVCALSGGVDSAVAALLLRRRGYQVTGVFMKNWDSLDEQGVCAADKDCEDAYKVCQILDIPFHQVSYVKEYWNDVFSDFLNEYEKGRTPNPDINCNKHIKFSCFYHYAVDNLGADAVATGHYARTSLEDEEVFEQKHTKKPDGLFRNRFEVRNPVKLLQAADSFKDQTFFLSQVSQDALRRTIFPLGELTKDFVKKIAAENSLHHVLQKRESMGICFIGKRNLEHFLLQYLQPRPGKFVSIEDNTVLGTHKGWFLYTLGQRAKISGLREPWYVVEKDGTKGDVLVAPRVDHPALYRDLLRTNRVHWIAEEPPAALVRDKMMECHFRFRHQMALVPCVLTLNQDGTVWVTAVKAVRGLALGQFAVFYKGEECLGSGKILRLGPSAYTLQKGKNRTRVAPEASSDSPGLHPTS.

Residues alanine 10–serine 17 and methionine 36 contribute to the ATP site. The segment at asparagine 96 to aspartate 98 is interaction with target base in tRNA. Cysteine 101 functions as the Nucleophile in the catalytic mechanism. Cysteine 101 and cysteine 222 are disulfide-bonded. Position 126 (glycine 126) interacts with ATP. The interval lysine 171–glutamine 173 is interaction with tRNA. Residue cysteine 222 is the Cysteine persulfide intermediate of the active site. Residues arginine 334–histidine 335 are interaction with tRNA. Positions lysine 397–serine 417 are disordered. Polar residues predominate over residues serine 407–serine 417.

It belongs to the MnmA/TRMU family. In terms of tissue distribution, widely expressed but most abundant in tissues with high metabolic rate including heart, liver and brain. Expression is low in spleen, testis, lung and skeletal muscle. Also expressed in inner ear.

Its subcellular location is the mitochondrion. The enzyme catalyses 5-taurinomethyluridine(34) in tRNA + S-sulfanyl-L-cysteinyl-[protein] + AH2 + ATP = 5-taurinomethyl-2-thiouridine(34) in tRNA + L-cysteinyl-[protein] + A + AMP + diphosphate + H(+). In terms of biological role, catalyzes the 2-thiolation of uridine at the wobble position (U34) of mitochondrial tRNA(Lys), tRNA(Glu) and tRNA(Gln). Required for the formation of 5-taurinomethyl-2-thiouridine (tm5s2U) of mitochondrial tRNA(Lys), tRNA(Glu), and tRNA(Gln) at the wobble position. ATP is required to activate the C2 atom of the wobble base. In Mus musculus (Mouse), this protein is Mitochondrial tRNA-specific 2-thiouridylase 1 (Trmu).